The following is a 471-amino-acid chain: MPN domain-containing protein (471 aa).

The span at 1 to 10 (MAAPEPLSPA) shows a compositional bias: low complexity. Positions 1 to 63 (MAAPEPLSPA…GGGGAGAGGC (63 aa)) are disordered. N-acetylalanine is present on alanine 2. Serine 8 is subject to Phosphoserine. Acidic residues predominate over residues 16 to 29 (EAPEEDEDEAEAED). Residues 36–63 (GAGGGRSGGGGSSVSGGGGGGGAGAGGC) are compositionally biased toward gly residues. The RAMA domain occupies 71–166 (TRRAVTLRVL…KYKATWLRLH (96 aa)). Positions 123, 125, and 145 each coordinate DNA. Positions 170-229 (TPATAADESPASEGEEEELLMEEEEEDVLAGVSAEDKSRRPLGKSPSEPAHPEATTPGKR) are disordered. Phosphoserine is present on residues serine 178 and serine 181. The segment covering 182–197 (EGEEEELLMEEEEEDV) has biased composition (acidic residues). An MPN domain is found at 272–407 (VAVSSNVLFL…PESKISPFWV (136 aa)). 3 residues coordinate Zn(2+): histidine 349, histidine 351, and aspartate 362. Residues 349-362 (HSHPHSPALPSLQD) carry the JAMM motif motif.

This sequence belongs to the peptidase M67 family. As to quaternary structure, monomer. Mainly monomoric, but when binds to dsDNA, forms homotetramer assembled into two homodimers. May interact with histones; this interaction is facilitated by dsDNA binding. In terms of processing, degraded following binding to N(6)-methyladenosine methylated DNA (m6A).

In terms of biological role, probable protease. Acts as a sensor of N(6)-methyladenosine methylation on DNA (m6A): recognizes and binds m6A DNA, leading to its degradation. Binds only double strand DNA (dsDNA) in a sequence-independent manner. The sequence is that of MPN domain-containing protein from Homo sapiens (Human).